Consider the following 235-residue polypeptide: Ribonuclease 3 (235 aa).

Residues 6 to 131 (IDQLKKLTGH…LIAVIYLDGG (126 aa)) form the RNase III domain. E44 provides a ligand contact to Mg(2+). D48 is a catalytic residue. Residues D117 and E120 each coordinate Mg(2+). The active site involves E120. Residues 156 to 225 (DAKTELQEWA…AEKILRREGM (70 aa)) enclose the DRBM domain.

Belongs to the ribonuclease III family. Homodimer. The cofactor is Mg(2+).

It localises to the cytoplasm. It carries out the reaction Endonucleolytic cleavage to 5'-phosphomonoester.. Functionally, digests double-stranded RNA. Involved in the processing of primary rRNA transcript to yield the immediate precursors to the large and small rRNAs (23S and 16S). Processes some mRNAs, and tRNAs when they are encoded in the rRNA operon. Processes pre-crRNA and tracrRNA of type II CRISPR loci if present in the organism. This Bartonella bacilliformis (strain ATCC 35685 / KC583 / Herrer 020/F12,63) protein is Ribonuclease 3.